A 285-amino-acid chain; its full sequence is NAD kinase (285 aa).

The active-site Proton acceptor is the Asp66. NAD(+) contacts are provided by residues 66–67 (DG), 137–138 (ND), Arg148, Arg165, Asp167, and 178–183 (TAYSLS).

The protein belongs to the NAD kinase family. Requires a divalent metal cation as cofactor.

Its subcellular location is the cytoplasm. The enzyme catalyses NAD(+) + ATP = ADP + NADP(+) + H(+). Functionally, involved in the regulation of the intracellular balance of NAD and NADP, and is a key enzyme in the biosynthesis of NADP. Catalyzes specifically the phosphorylation on 2'-hydroxyl of the adenosine moiety of NAD to yield NADP. The chain is NAD kinase from Chlorobium phaeobacteroides (strain BS1).